The sequence spans 290 residues: ATP synthase gamma chain (290 aa).

It belongs to the ATPase gamma chain family. In terms of assembly, F-type ATPases have 2 components, CF(1) - the catalytic core - and CF(0) - the membrane proton channel. CF(1) has five subunits: alpha(3), beta(3), gamma(1), delta(1), epsilon(1). CF(0) has three main subunits: a, b and c.

The protein resides in the cell inner membrane. Its function is as follows. Produces ATP from ADP in the presence of a proton gradient across the membrane. The gamma chain is believed to be important in regulating ATPase activity and the flow of protons through the CF(0) complex. The chain is ATP synthase gamma chain from Chelativorans sp. (strain BNC1).